The primary structure comprises 174 residues: Crossover junction endodeoxyribonuclease RuvC (174 aa).

Residues Asp-8, Glu-67, and Asp-139 contribute to the active site. Asp-8, Glu-67, and Asp-139 together coordinate Mg(2+).

This sequence belongs to the RuvC family. Homodimer which binds Holliday junction (HJ) DNA. The HJ becomes 2-fold symmetrical on binding to RuvC with unstacked arms; it has a different conformation from HJ DNA in complex with RuvA. In the full resolvosome a probable DNA-RuvA(4)-RuvB(12)-RuvC(2) complex forms which resolves the HJ. Requires Mg(2+) as cofactor.

The protein localises to the cytoplasm. It carries out the reaction Endonucleolytic cleavage at a junction such as a reciprocal single-stranded crossover between two homologous DNA duplexes (Holliday junction).. Its function is as follows. The RuvA-RuvB-RuvC complex processes Holliday junction (HJ) DNA during genetic recombination and DNA repair. Endonuclease that resolves HJ intermediates. Cleaves cruciform DNA by making single-stranded nicks across the HJ at symmetrical positions within the homologous arms, yielding a 5'-phosphate and a 3'-hydroxyl group; requires a central core of homology in the junction. The consensus cleavage sequence is 5'-(A/T)TT(C/G)-3'. Cleavage occurs on the 3'-side of the TT dinucleotide at the point of strand exchange. HJ branch migration catalyzed by RuvA-RuvB allows RuvC to scan DNA until it finds its consensus sequence, where it cleaves and resolves the cruciform DNA. The sequence is that of Crossover junction endodeoxyribonuclease RuvC from Pseudomonas paraeruginosa (strain DSM 24068 / PA7) (Pseudomonas aeruginosa (strain PA7)).